The following is a 162-amino-acid chain: Peptide deformylase (162 aa).

Residues cysteine 91 and histidine 133 each contribute to the Fe cation site. Glutamate 134 is a catalytic residue. Histidine 137 is a Fe cation binding site.

This sequence belongs to the polypeptide deformylase family. It depends on Fe(2+) as a cofactor.

The catalysed reaction is N-terminal N-formyl-L-methionyl-[peptide] + H2O = N-terminal L-methionyl-[peptide] + formate. Its function is as follows. Removes the formyl group from the N-terminal Met of newly synthesized proteins. Requires at least a dipeptide for an efficient rate of reaction. N-terminal L-methionine is a prerequisite for activity but the enzyme has broad specificity at other positions. This is Peptide deformylase from Finegoldia magna (strain ATCC 29328 / DSM 20472 / WAL 2508) (Peptostreptococcus magnus).